A 278-amino-acid chain; its full sequence is Phosphatidylglycerol--prolipoprotein diacylglyceryl transferase (278 aa).

4 helical membrane-spanning segments follow: residues 12–32 (FGPLTLRWYGLLIAMAVLIGL), 44–64 (LENGLISDLLPLLVLFSVIGA), 86–106 (IWEGGIAIHGALIAGTLTLIL), and 113–133 (QPFLDVLDVLAPSVALGQAIG). R134 contacts a 1,2-diacyl-sn-glycero-3-phospho-(1'-sn-glycerol). 3 helical membrane-spanning segments follow: residues 173–193 (PTFLYESIWNLLLFVLLLVLF), 203–223 (FPAGTLSCVYLIGYSLGRIWI), and 246–266 (IAQLMSAMLMVLGGLGLWWLK).

The protein belongs to the Lgt family.

The protein resides in the cell inner membrane. The enzyme catalyses L-cysteinyl-[prolipoprotein] + a 1,2-diacyl-sn-glycero-3-phospho-(1'-sn-glycerol) = an S-1,2-diacyl-sn-glyceryl-L-cysteinyl-[prolipoprotein] + sn-glycerol 1-phosphate + H(+). Its pathway is protein modification; lipoprotein biosynthesis (diacylglyceryl transfer). In terms of biological role, catalyzes the transfer of the diacylglyceryl group from phosphatidylglycerol to the sulfhydryl group of the N-terminal cysteine of a prolipoprotein, the first step in the formation of mature lipoproteins. In Parasynechococcus marenigrum (strain WH8102), this protein is Phosphatidylglycerol--prolipoprotein diacylglyceryl transferase.